The primary structure comprises 79 residues: Small ribosomal subunit protein bS18 (79 aa).

In terms of assembly, part of the 30S ribosomal subunit. Forms a tight heterodimer with protein bS6. In terms of processing, both N-terminus methionine truncation and retention have been observed for this protein. May be methylated up to 6 times, on undetermined residues.

Its function is as follows. Binds as a heterodimer with protein bS6 to the central domain of the 16S rRNA, where it helps stabilize the platform of the 30S subunit. The polypeptide is Small ribosomal subunit protein bS18 (Rhodopseudomonas palustris (strain ATCC BAA-98 / CGA009)).